The following is a 260-amino-acid chain: Thymidylate synthase (260 aa).

R21 provides a ligand contact to dUMP. H51 lines the (6R)-5,10-methylene-5,6,7,8-tetrahydrofolate pocket. 122 to 123 provides a ligand contact to dUMP; that stretch reads RR. The active-site Nucleophile is the C142. DUMP contacts are provided by residues 162 to 165, N173, and 203 to 205; these read RSAD and HLY. Residue D165 coordinates (6R)-5,10-methylene-5,6,7,8-tetrahydrofolate. A (6R)-5,10-methylene-5,6,7,8-tetrahydrofolate-binding site is contributed by A259.

Belongs to the thymidylate synthase family. Bacterial-type ThyA subfamily. In terms of assembly, homodimer.

Its subcellular location is the cytoplasm. The enzyme catalyses dUMP + (6R)-5,10-methylene-5,6,7,8-tetrahydrofolate = 7,8-dihydrofolate + dTMP. Its pathway is pyrimidine metabolism; dTTP biosynthesis. Catalyzes the reductive methylation of 2'-deoxyuridine-5'-monophosphate (dUMP) to 2'-deoxythymidine-5'-monophosphate (dTMP) while utilizing 5,10-methylenetetrahydrofolate (mTHF) as the methyl donor and reductant in the reaction, yielding dihydrofolate (DHF) as a by-product. This enzymatic reaction provides an intracellular de novo source of dTMP, an essential precursor for DNA biosynthesis. The sequence is that of Thymidylate synthase from Methylococcus capsulatus (strain ATCC 33009 / NCIMB 11132 / Bath).